The chain runs to 122 residues: Small ribosomal subunit protein bS16 (122 aa).

Belongs to the bacterial ribosomal protein bS16 family.

In Prochlorococcus marinus (strain MIT 9313), this protein is Small ribosomal subunit protein bS16.